The sequence spans 1213 residues: MVDVNRFKSMQITLASPSKVRSWSYGEVKKPETINYRTLKPEREGLFDEVIFGPTKDWECACGKYKRIRYKGIVCDRCGVEVTRAKVRRERMGHIELKAPVSHIWYFKGIPSRMGLTLDMSPRALEEVIYFAAYVVIDPKDTPLEPKSLLTEREYREKLQEYGHGSFVAKMGAEAIQDLLKRVDLAAEIAELKEELKSASGQKRIKAVRRLDVLDAFNKSGNKPEWMVLNILPVIPPDLRPMVQLDGGRFAASDLNDLYRRVINRNNRLARLLELNAPGIIVQNEKRMLQEAVDALIDNGRRGRPITGPGSRPLKSLSHMLKGKQGRFRQNLLGKRVDFSGRSVIAVGPTLKMYQCGVPREMAIELFKPFVMREIVAKEYAGNVKAAKRMVERGDERIWDILEEVIKEHPVLLNRAPTLHRLGIQAFEPVLIDGKALRLHPLVCEAYNADFDGDQMAIHVPLSEEAQAEARLLMLAAEHILNPKDGKPVVTPSQDMVLGNYYLTMEDAGREGEGMIFKDKDEAVMAYRNGYAHLHSRVGIAVDSMPNKPWKDNQRHKIMVTTVGKILFNDIMPEDLPYLQEPNNANLTEGTPDKYFLEPGQDIQEVIDRLDINVPFKKKNLGNIIAETFKRFRTTETSAFLDRLKDLGYYHSTLAGLTVGIADIPVIDNKAEIIDAAHHRVEEINKAFRRGLMTDDDRYVAVTTTWREAKEALEKRLIETQDPKNPIVMMMDSGARGNISNFSQLAGMRGLMAAPNGRIMELPILSNFREGLSVLEMFFSTHGARKGMTDTALKTADSGYLTRRLVDVAQDVIIREDDCGTDRGLLIRAITDGKEVTETLEERLQGRYTRKSVKHPETGEVLIGADQLITEDMARKIVDAGVEEVTIRSVFTCATRHGVCRHCYGINLATGDAVEVGEAVGTIAAQSIGEPGTQLTMRTFHTGGVASNTDITQGLPRIQEIFEARNPKGEAVITEVKGNVVEIEEDASTRTKKVYVQGKTGMGEYVIPFTARMKVEVGDEVNRGAALTEGSIQPKRLLEVRDTLSVETYLLAEVQKVYRSQGVEIGDKHVEVMVRQMLRKVRVMDPGDTDLLPGTLMDISDFTDANKDIVISGGIPATSRPVLMGITKASLETNSFLSAASFQETTRVLTDAAIRGKKDHLLGLKENVIIGKIIPAGTGMARYRNIEPQAMNEIEVIDHTEVSAEAVFTAEAE.

Zn(2+) contacts are provided by Cys60, Cys62, Cys75, and Cys78. Mg(2+)-binding residues include Asp450, Asp452, and Asp454. Residues Cys819, Cys893, Cys900, and Cys903 each coordinate Zn(2+).

This sequence belongs to the RNA polymerase beta' chain family. In terms of assembly, the RNAP catalytic core consists of 2 alpha, 1 beta, 1 beta' and 1 omega subunit. When a sigma factor is associated with the core the holoenzyme is formed, which can initiate transcription. Mg(2+) is required as a cofactor. Requires Zn(2+) as cofactor.

The catalysed reaction is RNA(n) + a ribonucleoside 5'-triphosphate = RNA(n+1) + diphosphate. DNA-dependent RNA polymerase catalyzes the transcription of DNA into RNA using the four ribonucleoside triphosphates as substrates. The polypeptide is DNA-directed RNA polymerase subunit beta' (Streptococcus pyogenes serotype M1).